The sequence spans 877 residues: Leucine--tRNA ligase (877 aa).

A 'HIGH' region motif is present at residues proline 48–histidine 58. Positions lysine 636–serine 640 match the 'KMSKS' region motif. Lysine 639 serves as a coordination point for ATP.

This sequence belongs to the class-I aminoacyl-tRNA synthetase family.

It is found in the cytoplasm. It catalyses the reaction tRNA(Leu) + L-leucine + ATP = L-leucyl-tRNA(Leu) + AMP + diphosphate. This chain is Leucine--tRNA ligase, found in Ralstonia nicotianae (strain ATCC BAA-1114 / GMI1000) (Ralstonia solanacearum).